The sequence spans 977 residues: Phosphatidylinositol 4-kinase PIK1alpha (977 aa).

In terms of domain architecture, PIK helical spans 1–125; it reads MSADITETPN…QAVRNLITKI (125 aa). Positions 205–261 are disordered; sequence MSADIPKGSHSDDETATSSSIKPSLSRSASVPRRNTKKTSLSFSSDESEAYTTDDDD. The segment covering 220–233 has biased composition (polar residues); that stretch reads ATSSSIKPSLSRSA. The segment covering 250–261 has biased composition (acidic residues); that stretch reads DESEAYTTDDDD. The 282-residue stretch at 679–960 folds into the PI3K/PI4K catalytic domain; the sequence is EDWNTKKQRI…FLIGKSLGSM (282 aa). Positions 685–691 are G-loop; that stretch reads KQRIKKS. The interval 826–834 is catalytic loop; sequence QIKDRHNGN. The tract at residues 845-869 is activation loop; the sequence is HIDFGFLLSNSPGSVGFEAAPFKLT.

Belongs to the PI3/PI4-kinase family. Type III PI4K subfamily.

The protein localises to the nucleus. The catalysed reaction is a 1,2-diacyl-sn-glycero-3-phospho-(1D-myo-inositol) + ATP = a 1,2-diacyl-sn-glycero-3-phospho-(1D-myo-inositol 4-phosphate) + ADP + H(+). In terms of biological role, acts on phosphatidylinositol (PI) in the first committed step in the production of the second messenger inositol 1,4,5,-trisphosphate. The sequence is that of Phosphatidylinositol 4-kinase PIK1alpha (PIKALPHA) from Candida albicans (strain SC5314 / ATCC MYA-2876) (Yeast).